A 106-amino-acid chain; its full sequence is UPF0060 membrane protein Oant_2511 (106 aa).

Transmembrane regions (helical) follow at residues 3-23 (FAIY…FWAW), 30-50 (PLWL…LTLI), 60-80 (AAYG…AEGA), and 84-104 (RWDV…LFAP).

This sequence belongs to the UPF0060 family.

It localises to the cell inner membrane. The chain is UPF0060 membrane protein Oant_2511 from Brucella anthropi (strain ATCC 49188 / DSM 6882 / CCUG 24695 / JCM 21032 / LMG 3331 / NBRC 15819 / NCTC 12168 / Alc 37) (Ochrobactrum anthropi).